Consider the following 308-residue polypeptide: Ornithine carbamoyltransferase (308 aa).

Carbamoyl phosphate is bound by residues 57 to 60 (STRT), Gln-84, Arg-108, and 135 to 138 (HPCQ). Residues Asn-166, Asp-224, and 228-229 (SM) contribute to the L-ornithine site. Residues 264-265 (CL) and Arg-292 each bind carbamoyl phosphate.

This sequence belongs to the aspartate/ornithine carbamoyltransferase superfamily. OTCase family.

It is found in the cytoplasm. The catalysed reaction is carbamoyl phosphate + L-ornithine = L-citrulline + phosphate + H(+). Its pathway is amino-acid biosynthesis; L-arginine biosynthesis; L-arginine from L-ornithine and carbamoyl phosphate: step 1/3. In terms of biological role, reversibly catalyzes the transfer of the carbamoyl group from carbamoyl phosphate (CP) to the N(epsilon) atom of ornithine (ORN) to produce L-citrulline. This is Ornithine carbamoyltransferase from Ralstonia nicotianae (strain ATCC BAA-1114 / GMI1000) (Ralstonia solanacearum).